A 244-amino-acid polypeptide reads, in one-letter code: Methylthioribulose-1-phosphate dehydratase (244 aa).

A substrate-binding site is contributed by C89. 2 residues coordinate Zn(2+): H107 and H109. The Proton donor/acceptor role is filled by E130. H192 contributes to the Zn(2+) binding site.

Belongs to the aldolase class II family. MtnB subfamily. Requires Zn(2+) as cofactor.

Its subcellular location is the cytoplasm. The enzyme catalyses 5-(methylsulfanyl)-D-ribulose 1-phosphate = 5-methylsulfanyl-2,3-dioxopentyl phosphate + H2O. Its pathway is amino-acid biosynthesis; L-methionine biosynthesis via salvage pathway; L-methionine from S-methyl-5-thio-alpha-D-ribose 1-phosphate: step 2/6. In terms of biological role, catalyzes the dehydration of methylthioribulose-1-phosphate (MTRu-1-P) into 2,3-diketo-5-methylthiopentyl-1-phosphate (DK-MTP-1-P). This is Methylthioribulose-1-phosphate dehydratase from Saccharomyces cerevisiae (strain YJM789) (Baker's yeast).